Reading from the N-terminus, the 32-residue chain is Cytochrome b6-f complex subunit 7 (32 aa).

A helical membrane pass occupies residues 9–27; that stretch reads AAVFWILIPIGLVGGALLL.

The protein belongs to the PetM family. As to quaternary structure, the 4 large subunits of the cytochrome b6-f complex are cytochrome b6, subunit IV (17 kDa polypeptide, PetD), cytochrome f and the Rieske protein, while the 4 small subunits are PetG, PetL, PetM and PetN. The complex functions as a dimer.

The protein localises to the cellular thylakoid membrane. Its function is as follows. Component of the cytochrome b6-f complex, which mediates electron transfer between photosystem II (PSII) and photosystem I (PSI), cyclic electron flow around PSI, and state transitions. This is Cytochrome b6-f complex subunit 7 from Prochlorococcus marinus (strain MIT 9515).